Reading from the N-terminus, the 1010-residue chain is MEGAAPPASSGSEVTGAGSGKVDAGGGAAMEERFADLCKSKLGLDESITRQAMQLFKESKSILLSSMSSLGSGSPEEIERFWSAFVLYCVSRLGKAGKGKEDGGISLCQILRAFSLNIVDFFKEMPQFCIKVGSVLAGLYGSDWEKRLELKELQANVVHLSLLSRYYKRAYQELFLLNDAKPPENSAEPNAQASDYYRFGWLLFLVLRIQTFSRFKDLVTSTNGLVSVLAVLIVHIPVRLRNFNIKESSSFAKKSDKGVNLIASLCEKYHTSEDELSKAIEKTNTLIVDILKKKPCPAASECQQDRLSFIDPEGLTYFKNLLEEDSLKLSLLMLEKEYENAINTKGELDERMFANDEDSLLGSGSLSGGAINLPGTKRKYDVMASPAKSITSPSPMSPPRFCASPTGNGYCSSKMAPITPVSTAMTTAKWLRSTISPLPSKPSGELLRFFSACDKDVTDDITRRAGIILGAIFTSSSFGERICTSVRSTNRIDAIWTEQRKMEALKLYYRVLESMCRAETQILSGNNLTSLLSNERFHRCMIACSAELVLATHKTVTMMFPAVLEKTGITAFDLSKVIESFVRHEDTLPRELKRHLNSLEERLLESMAWEKGSSMYNSLIVARPTLSAEINRLGLLAEPMPSLDAIAAHHNISLEGLPPLPFQKQEHSPDKDEVRSPKRACTERRNVLVDNNSFRSPVKDTLKSKLPPLQSAFLSPTRPNPAAGGELCAETGIGVFLSKIAKLAAIRIRGLCERLQLSQQVLERVYSLVQQIIIQQTALFFNRHIDQIILCSIYGVAKISQLALTFKEIIFGYRKQSQCKPQVFRSVYVHWASRSRNGKTGEDHVDIITFYNEVFIPTVKPLLVELGSGTSPNKKNEEKCAADGPYPESPRLSRFPNLPDMSPKKVSAAHNVYVSPLRTSKMDTLLSPSSKSYYACVGESTHAFQSPSKDLKVINNRLNSGKKVSGRLNFDVVSDLVVARSLSDQNSASAAATTADIATKTPVKLEQPDC.

Residues 1 to 23 (MEGAAPPASSGSEVTGAGSGKVD) form a disordered region. Residues 419 to 619 (TPVSTAMTTA…EKGSSMYNSL (201 aa)) form a domain A region. The tract at residues 419 to 861 (TPVSTAMTTA…NEVFIPTVKP (443 aa)) is pocket. A spacer region spans residues 620–730 (IVARPTLSAE…PAAGGELCAE (111 aa)). Residues 657-679 (LPPLPFQKQEHSPDKDEVRSPKR) are disordered. The segment covering 664 to 679 (KQEHSPDKDEVRSPKR) has biased composition (basic and acidic residues). The tract at residues 731–861 (TGIGVFLSKI…NEVFIPTVKP (131 aa)) is domain B. Positions 868 to 898 (SGTSPNKKNEEKCAADGPYPESPRLSRFPNL) are disordered.

This sequence belongs to the retinoblastoma protein (RB) family.

The protein localises to the nucleus. In terms of biological role, regulator of biological processes that recruits a histone deacetylase to control gene transcription. May play a role in the entry into mitosis, negatively regulating the cell proliferation. Formation of stable complexes with geminiviridae replication-associated proteins may create a cellular environment which favors viral DNA replication. The protein is Retinoblastoma-related protein 1 (RBR1) of Oryza sativa subsp. japonica (Rice).